Consider the following 232-residue polypeptide: Triosephosphate isomerase (232 aa).

Substrate is bound at residue 6-8 (NFK). Histidine 86 functions as the Electrophile in the catalytic mechanism. Catalysis depends on glutamate 155, which acts as the Proton acceptor. Residues glycine 161 and serine 191 each coordinate substrate.

Belongs to the triosephosphate isomerase family. In terms of assembly, homodimer.

It localises to the cytoplasm. It carries out the reaction D-glyceraldehyde 3-phosphate = dihydroxyacetone phosphate. It functions in the pathway carbohydrate biosynthesis; gluconeogenesis. Its pathway is carbohydrate degradation; glycolysis; D-glyceraldehyde 3-phosphate from glycerone phosphate: step 1/1. Its function is as follows. Involved in the gluconeogenesis. Catalyzes stereospecifically the conversion of dihydroxyacetone phosphate (DHAP) to D-glyceraldehyde-3-phosphate (G3P). This Nitratiruptor sp. (strain SB155-2) protein is Triosephosphate isomerase.